The chain runs to 162 residues: MKILSVFFLALFFIIFNKESLAEKTNKGTGSGVSSKKKNKKGSGEPLIDVHDLISDMIKKEEELVEVNKRKSKYKLATSVLAGLLGVVSTVLLGGVGLVLYNTEKGRHPFKIGSSDPADNANPDADSESNGEPNADPQVTAQDVTPEQPQGDDNNLVSGPEH.

The N-terminal stretch at 1–16 (MKILSVFFLALFFIIF) is a signal peptide. Disordered regions lie at residues 24 to 44 (KTNK…KGSG) and 109 to 162 (PFKI…GPEH). The segment covering 114-130 (SSDPADNANPDADSESN) has biased composition (low complexity). Over residues 137 to 162 (PQVTAQDVTPEQPQGDDNNLVSGPEH) the composition is skewed to polar residues.

The protein is Circumsporozoite protein-related antigen of Plasmodium falciparum.